The sequence spans 751 residues: Diamine oxidase [copper-containing] (751 aa).

Residues 1–22 form the signal peptide; sequence MSLAFGWAAVILLLQTADTASA. N-linked (GlcNAc...) asparagine glycans are attached at residues N61 and N110. Residue D373 is the Proton acceptor of the active site. A disulfide bridge connects residues C391 and C417. Y461 (schiff-base intermediate with substrate; via topaquinone) is an active-site residue. Y461 is subject to 2',4',5'-topaquinone. The Cu(2+) site is built by H510 and H512. 3 residues coordinate Ca(2+): D519, L520, and D521. The N-linked (GlcNAc...) asparagine glycan is linked to N538. Ca(2+) contacts are provided by E562, F653, N656, E658, D664, and L665. H675 lines the Cu(2+) pocket. Residue N745 is glycosylated (N-linked (GlcNAc...) asparagine).

Belongs to the copper/topaquinone oxidase family. Homodimer; disulfide-linked. It depends on Cu(2+) as a cofactor. Ca(2+) is required as a cofactor. Requires L-topaquinone as cofactor. In terms of processing, topaquinone (TPQ) is generated by copper-dependent autoxidation of a specific tyrosyl residue. Post-translationally, N-glycosylated.

The protein resides in the secreted. It localises to the extracellular space. Its subcellular location is the cell membrane. The enzyme catalyses histamine + O2 + H2O = imidazole-4-acetaldehyde + H2O2 + NH4(+). It catalyses the reaction N(tau)-methylhistamine + O2 + H2O = 1-methylimidazole-4-acetaldehyde + H2O2 + NH4(+). It carries out the reaction putrescine + O2 + H2O = 4-aminobutanal + H2O2 + NH4(+). The catalysed reaction is cadaverine + O2 + H2O = 5-aminopentanal + H2O2 + NH4(+). Inhibited by amiloride and amiloride analogs. In terms of biological role, catalyzes the oxidative deamination of primary amines to the corresponding aldehydes with the concomitant production of hydrogen peroxide and ammonia. Its preferred substrates in vitro are the diamines histamine and 1-methylhistamine and it could therefore play a role in allergic and immune responses. Has a broad specificity for diamines and can also act on cadaverine and putrescine, two products of amino acid catabolism. It could also act on polyamines, like spermidine and spermine though less efficiently, and regulate various biological processes. This chain is Diamine oxidase [copper-containing], found in Mus musculus (Mouse).